The following is an 832-amino-acid chain: Protein P (832 aa).

A terminal protein domain (TP) region spans residues Met1–Gln177. Positions Glu178–Leu335 are spacer. Residues Lys208–Ser224 are compositionally biased toward low complexity. The tract at residues Lys208–Arg241 is disordered. Positions Glu336–Gln679 are polymerase/reverse transcriptase domain (RT). Residues Glu346–Ile589 form the Reverse transcriptase domain. Positions 418, 540, and 541 each coordinate Mg(2+).

It belongs to the hepadnaviridae P protein family.

The catalysed reaction is DNA(n) + a 2'-deoxyribonucleoside 5'-triphosphate = DNA(n+1) + diphosphate. It catalyses the reaction Endonucleolytic cleavage to 5'-phosphomonoester.. Its activity is regulated as follows. Activated by host HSP70 and HSP40 in vitro to be able to bind the epsilon loop of the pgRNA. Because deletion of the RNase H region renders the protein partly chaperone-independent, the chaperones may be needed indirectly to relieve occlusion of the RNA-binding site by this domain. Inhibited by several reverse-transcriptase inhibitors: Lamivudine, Adefovir and Entecavir. Its function is as follows. Multifunctional enzyme that converts the viral RNA genome into dsDNA in viral cytoplasmic capsids. This enzyme displays a DNA polymerase activity that can copy either DNA or RNA templates, and a ribonuclease H (RNase H) activity that cleaves the RNA strand of RNA-DNA heteroduplexes in a partially processive 3'- to 5'-endonucleasic mode. Neo-synthesized pregenomic RNA (pgRNA) are encapsidated together with the P protein, and reverse-transcribed inside the nucleocapsid. Initiation of reverse-transcription occurs first by binding the epsilon loop on the pgRNA genome, and is initiated by protein priming, thereby the 5'-end of (-)DNA is covalently linked to P protein. Partial (+)DNA is synthesized from the (-)DNA template and generates the relaxed circular DNA (RC-DNA) genome. After budding and infection, the RC-DNA migrates in the nucleus, and is converted into a plasmid-like covalently closed circular DNA (cccDNA). The activity of P protein does not seem to be necessary for cccDNA generation, and is presumably released from (+)DNA by host nuclear DNA repair machinery. This chain is Protein P, found in Gibbon hepatitis B virus subtype ayw3q (isolate Hope) (HBVgbn).